Consider the following 1141-residue polypeptide: PR domain zinc finger protein 15 (1141 aa).

In terms of domain architecture, SET spans 49–159 (PNLEIRRLED…PGTELRVWYA (111 aa)). The segment at 197–219 (WACKVCSATFLELQLLNEHLLGH) adopts a C2H2-type 1 zinc-finger fold. Positions 224–283 (KSLPPGSQSEAAAPEKEQDTPRGEPPAVPESENVATKEQKKKPRRGRKPKVSKAEQPLVI) are disordered. A compositionally biased stretch (basic and acidic residues) spans 236-245 (APEKEQDTPR). Basic residues predominate over residues 262-274 (QKKKPRRGRKPKV). 4 C2H2-type zinc fingers span residues 372-394 (YQCN…VRSH), 399-422 (FKCE…SYKH), 460-482 (FQCE…KKKH), and 487-509 (FACE…QRRH). Residue Lys-517 forms a Glycyl lysine isopeptide (Lys-Gly) (interchain with G-Cter in SUMO2) linkage. 2 C2H2-type zinc fingers span residues 536–558 (SGCP…LLTH) and 563–585 (YTCE…IHVH). Residues 604–623 (IGISSEENDDNSDESADSEP) form a disordered region. The span at 609 to 620 (EENDDNSDESAD) shows a compositional bias: acidic residues. 9 C2H2-type zinc fingers span residues 626–649 (YSCK…MEVH), 654–676 (YGCS…MVIH), 690–712 (HPCE…KLIH), 718–740 (HACE…MRVH), 746–768 (YLCA…MKLH), 774–796 (YECK…CKRH), 802–824 (FMCE…KLIH), 830–853 (WTCS…QLTH), and 859–882 (QSCQ…RRKH). Disordered regions lie at residues 922–973 (AEGK…DETN) and 1108–1141 (QTDV…MYSY). The segment covering 927–938 (GKAAKRSHKRKQ) has biased composition (basic residues). Residues 1121-1141 (PQQAAQPQVQAEQQQQQMYSY) are compositionally biased toward low complexity.

The protein belongs to the class V-like SAM-binding methyltransferase superfamily. Detected in all tissues examined.

It localises to the nucleus. In terms of biological role, sequence-specific DNA-binding transcriptional regulator. Plays a role as a molecular node in a transcriptional network regulating embryonic development and cell fate decision. Stimulates the expression of upstream key transcriptional activators and repressors of the Wnt/beta-catenin and MAPK/ERK pathways, respectively, that are essential for naive pluripotency and self-renewal maintenance of embryonic stem cells (ESCs). Specifically promotes SPRY1 and RSPO1 transcription activation through recognition and direct binding of a specific DNA sequence in their promoter regions. Involved in early embryo development. Also plays a role in induced pluripotent stem cells (iPSCs) reprogramming. The protein is PR domain zinc finger protein 15 of Homo sapiens (Human).